Here is a 342-residue protein sequence, read N- to C-terminus: Glucan endo-1,3-beta-glucosidase (342 aa).

The first 26 residues, 1 to 26 (MLASSPMLLFLLSLLMAYNFDTTAGQ), serve as a signal peptide directing secretion. The Proton donor role is filled by glutamate 119. The active-site Nucleophile is glutamate 261.

It belongs to the glycosyl hydrolase 17 family. Post-translationally, the N-terminus is blocked.

Its subcellular location is the vacuole. The catalysed reaction is Hydrolysis of (1-&gt;3)-beta-D-glucosidic linkages in (1-&gt;3)-beta-D-glucans.. Is thought to be an important plant defense-related product against fungal pathogens. Accumulation of the glucanase can be detected as early as 4 hours after inoculation. The polypeptide is Glucan endo-1,3-beta-glucosidase (BGL) (Brassica campestris (Field mustard)).